A 531-amino-acid chain; its full sequence is UDP-glucuronosyltransferase 1A7 (531 aa).

The first 25 residues, 1–25, serve as a signal peptide directing secretion; that stretch reads MAPADFPASLPLCVCLLLASGLAQA. N-linked (GlcNAc...) asparagine glycosylation is found at Asn-293 and Asn-431. A helical membrane pass occupies residues 489-509; it reads VIGFLLAIVLTVVFIVFKCCA.

It belongs to the UDP-glycosyltransferase family. Homodimer. Homooligomer. Interacts with UGT1A1, UGT1A3, UGT1A4, UGT1A6, UGT1A8, UGT1A9 and UGT1A10 to form heterodimers. As to expression, widely expressed with highest levels detected in colon and kidney.

Its subcellular location is the endoplasmic reticulum membrane. The catalysed reaction is glucuronate acceptor + UDP-alpha-D-glucuronate = acceptor beta-D-glucuronoside + UDP + H(+). It carries out the reaction 17alpha-estradiol + UDP-alpha-D-glucuronate = 17alpha-estradiol 3-O-(beta-D-glucuronate) + UDP + H(+). It catalyses the reaction prunetin + UDP-alpha-D-glucuronate = prunetin-5-O-beta-D-glucuronide + UDP. The enzyme catalyses 5-epi-5-F2t-IsoP + UDP-alpha-D-glucuronate = 5-epi-5-F2t-IsoP-glucuronide + UDP + H(+). The catalysed reaction is (E)-ferulate + UDP-alpha-D-glucuronate = (E)-ferulic acid beta-D-glucuronate ester + UDP. It carries out the reaction candesartan + UDP-alpha-D-glucuronate = candesartan O-beta-D-glucuronoside + UDP. It catalyses the reaction SN-38 + UDP-alpha-D-glucuronate = SN-38 O-beta-D-glucuronide + UDP + H(+). The enzyme catalyses mycophenolate + UDP-alpha-D-glucuronate = mycophenolate 7-O-beta-D-glucuronide + UDP + H(+). UDP-glucuronosyltransferase (UGT) that catalyzes phase II biotransformation reactions in which lipophilic substrates are conjugated with glucuronic acid to increase the metabolite's water solubility, thereby facilitating excretion into either the urine or bile. Essential for the elimination and detoxification of drugs, xenobiotics and endogenous compounds. Catalyzes the glucuronidation of endogenous estrogen hormone epiestradiol. Involved in the glucuronidation of F2-isoprostane (5-epi-5-F2t-IsoP). Involved in the glucuronidation of the phytochemical ferulic acid at the carboxylic acid group. Also catalyzes the glucuronidation of the isoflavones genistein, daidzein, glycitein, formononetin, biochanin A and prunetin, which are phytoestrogens with anticancer and cardiovascular properties. Involved in the glucuronidation of the AGTR1 angiotensin receptor antagonist caderastan, a drug which can inhibit the effect of angiotensin II. Involved in the biotransformation of 7-ethyl-10-hydroxycamptothecin (SN-38), the pharmacologically active metabolite of the anticancer drug irinotecan. Also metabolizes mycophenolate, an immunosuppressive agent. In Mus musculus (Mouse), this protein is UDP-glucuronosyltransferase 1A7.